The primary structure comprises 204 residues: Probable dTDP-4-oxo-2,6-dideoxy-D-glucose 3,5-epimerase (204 aa).

Substrate contacts are provided by residues Arg-21, Glu-26, 45-47 (QAN), Lys-70, and His-117. Tyr-130 (proton donor) is an active-site residue. A substrate-binding site is contributed by Glu-141. Positions 164–204 (VGEGTPTHRPWRRPRRPGILPDYEGVPGALHRGGGRRGTGP) are disordered.

It belongs to the dTDP-4-dehydrorhamnose 3,5-epimerase family.

Its pathway is antibiotic biosynthesis. In terms of biological role, involved in the biosynthesis of one of the two 2,6-deoxysugars, dTDP-L-oleandrose, attached to the macrolactone ring oleandolide to produce the aglycone antibiotic oleandomycin. Probably catalyzes the conversion of dTDP-4-keto-2,6-dideoxy-alpha-D-glucose to dTDP-4-keto-2,6-dideoxy-beta-L-galactose. The polypeptide is Probable dTDP-4-oxo-2,6-dideoxy-D-glucose 3,5-epimerase (Streptomyces antibioticus).